The sequence spans 637 residues: tRNA-dihydrouridine(47) synthase [NAD(P)(+)]-like (637 aa).

Disordered stretches follow at residues 1–21, 41–63, and 85–105; these read MAET…ACER, LDGD…EPGA, and ERQV…VKPA. The span at 89 to 104 shows a compositional bias: basic residues; the sequence is PKRARGQNKSRPHVKP. 2 C3H1-type zinc fingers span residues 107–137 and 145–175; these read YDKD…HDVG and ADLG…HLGP. Position 260 is a phosphothreonine (Thr260). 2 positions are modified to phosphoserine: Ser263 and Ser264. FMN is bound by residues 298-300 and Gln352; that span reads PLT. Catalysis depends on Cys383, which acts as the Proton donor. Lys403 is covalently cross-linked (Glycyl lysine isopeptide (Lys-Gly) (interchain with G-Cter in SUMO2)). FMN is bound by residues Lys422, His452, 484–486, and 507–508; these read NGD and AR.

It belongs to the Dus family. Dus3 subfamily. FMN serves as cofactor.

It catalyses the reaction 5,6-dihydrouridine(47) in tRNA + NAD(+) = uridine(47) in tRNA + NADH + H(+). The enzyme catalyses 5,6-dihydrouridine(47) in tRNA + NADP(+) = uridine(47) in tRNA + NADPH + H(+). The catalysed reaction is a 5,6-dihydrouridine in mRNA + NAD(+) = a uridine in mRNA + NADH + H(+). It carries out the reaction a 5,6-dihydrouridine in mRNA + NADP(+) = a uridine in mRNA + NADPH + H(+). Catalyzes the synthesis of dihydrouridine, a modified base, in various RNAs, such as tRNAs, mRNAs and some long non-coding RNAs (lncRNAs). Mainly modifies the uridine in position 47 (U47) in the D-loop of most cytoplasmic tRNAs. Also able to mediate the formation of dihydrouridine in some mRNAs, thereby regulating their translation. The protein is tRNA-dihydrouridine(47) synthase [NAD(P)(+)]-like of Mus musculus (Mouse).